The chain runs to 370 residues: CST complex subunit STN1 (370 aa).

The interaction with CTC1 stretch occupies residues 1–187; that stretch reads MESNSSQCED…KVYDQPFHSP (187 aa). Positions 57-157 form a DNA-binding region, OB; sequence VDILGTVIGV…EIHATTYYKV (101 aa). 2 winged helix-turn-helix (wHTH) regions span residues 193 to 297 and 298 to 370; these read EALS…YVTR and EDKE…YTAF.

Belongs to the STN1 family. Component of the CST complex, composed of TEN1/C17orf106, CTC1/C17orf68 and STN1; in the complex interacts directly with TEN1 and CTC1. Interacts with ACD/TPP1, POT1 and POLA1.

It is found in the nucleus. Its subcellular location is the chromosome. The protein resides in the telomere. Its function is as follows. Component of the CST complex proposed to act as a specialized replication factor promoting DNA replication under conditions of replication stress or natural replication barriers such as the telomere duplex. The CST complex binds single-stranded DNA with high affinity in a sequence-independent manner, while isolated subunits bind DNA with low affinity by themselves. Initially the CST complex has been proposed to protect telomeres from DNA degradation. However, the CST complex has been shown to be involved in several aspects of telomere replication. The CST complex inhibits telomerase and is involved in telomere length homeostasis; it is proposed to bind to newly telomerase-synthesized 3' overhangs and to terminate telomerase action implicating the association with the ACD:POT1 complex thus interfering with its telomerase stimulation activity. The CST complex is also proposed to be involved in fill-in synthesis of the telomeric C-strand probably implicating recruitment and activation of DNA polymerase alpha. The CST complex facilitates recovery from many forms of exogenous DNA damage; seems to be involved in the re-initiation of DNA replication at repaired forks and/or dormant origins. Required for efficicient replication of the duplex region of the telomere. Promotes efficient replication of lagging-strand telomeres. Promotes general replication start following replication-fork stalling implicating new origin firing. May be in involved in C-strand fill-in during late S/G2 phase independent of its role in telomere duplex replication. The protein is CST complex subunit STN1 of Bos taurus (Bovine).